A 423-amino-acid chain; its full sequence is Glucose-1-phosphate adenylyltransferase (423 aa).

Alpha-D-glucose 1-phosphate-binding positions include Y108, G173, 188–189 (EK), and S207.

This sequence belongs to the bacterial/plant glucose-1-phosphate adenylyltransferase family. In terms of assembly, homotetramer.

The enzyme catalyses alpha-D-glucose 1-phosphate + ATP + H(+) = ADP-alpha-D-glucose + diphosphate. Its pathway is glycan biosynthesis; glycogen biosynthesis. In terms of biological role, involved in the biosynthesis of ADP-glucose, a building block required for the elongation reactions to produce glycogen. Catalyzes the reaction between ATP and alpha-D-glucose 1-phosphate (G1P) to produce pyrophosphate and ADP-Glc. The protein is Glucose-1-phosphate adenylyltransferase of Francisella tularensis subsp. mediasiatica (strain FSC147).